Here is a 587-residue protein sequence, read N- to C-terminus: Protein cereblon (587 aa).

Disordered regions lie at residues 1 to 56 (MDEE…PAEY), 78 to 113 (DVLQ…GLPN), and 157 to 195 (FSQE…IDIG). Polar residues-rich tracts occupy residues 22-31 (EDQSQSQGLQ) and 86-96 (SEGSHPSSDMS). Residues 159–168 (QERRRSRTSE) show a composition bias toward basic and acidic residues. Residues 170-181 (TSQEEAAEEPDD) show a composition bias toward acidic residues. Residues 182–191 (PPPQQPPLPP) are compositionally biased toward pro residues. Positions 227-453 (HMLIFLHHHI…LIKSTFKDET (227 aa)) constitute a Lon N-terminal domain. A CULT domain is found at 452–561 (ETLFFCRYCN…LSGSSVRIGK (110 aa)). Zn(2+)-binding residues include Cys-457, Cys-460, Cys-526, and Cys-529.

This sequence belongs to the CRBN family. As to quaternary structure, likely a component of a DCX (DDB1-CUL4-X-box) protein ligase complex. May interact with pic/DDB1. Post-translationally, ubiquitinated.

The protein resides in the nucleus. Its pathway is protein modification; protein ubiquitination. Functionally, substrate recognition component of a DCX (DDB1-CUL4-X-box) E3 protein ligase complex that mediates the ubiquitination and subsequent proteasomal degradation of target proteins. Has an essential role in mediating growth by negatively regulating insulin signaling. It also has a role in maintaining presynaptic function in the neuromuscular junction synapses of third-instar larvae. This chain is Protein cereblon, found in Drosophila simulans (Fruit fly).